Consider the following 142-residue polypeptide: Interleukin-3 (142 aa).

Positions 1-18 (MSHLPILLLLLLVSPGLQ) are cleaved as a signal peptide. Asn33, Asn88, and Asn108 each carry an N-linked (GlcNAc...) asparagine glycan. Cysteines 34 and 102 form a disulfide.

It belongs to the IL-3 family. In terms of assembly, monomer. Activated T-cells, mast cells, natural killer cells.

The protein localises to the secreted. Its function is as follows. Granulocyte/macrophage colony-stimulating factors are cytokines that act in hematopoiesis by controlling the production, differentiation, and function of 2 related white cell populations of the blood, the granulocytes and the monocytes-macrophages. In terms of biological role, this CSF induces granulocytes, macrophages, mast cells, stem cells, erythroid cells, eosinophils and megakaryocytes. The chain is Interleukin-3 (IL3) from Saguinus oedipus (Cotton-top tamarin).